Reading from the N-terminus, the 570-residue chain is Urease subunit alpha (570 aa).

A Urease domain is found at 132–570 (GGFDSHIHYI…LPLAQRYFLF (439 aa)). Positions 137, 139, and 220 each coordinate Ni(2+). The residue at position 220 (K220) is an N6-carboxylysine. Residue H222 coordinates substrate. 2 residues coordinate Ni(2+): H249 and H275. H323 serves as the catalytic Proton donor. D363 is a binding site for Ni(2+).

The protein belongs to the metallo-dependent hydrolases superfamily. Urease alpha subunit family. In terms of assembly, heterotrimer of UreA (gamma), UreB (beta) and UreC (alpha) subunits. Three heterotrimers associate to form the active enzyme. Requires Ni cation as cofactor. In terms of processing, carboxylation allows a single lysine to coordinate two nickel ions.

It localises to the cytoplasm. The catalysed reaction is urea + 2 H2O + H(+) = hydrogencarbonate + 2 NH4(+). It functions in the pathway nitrogen metabolism; urea degradation; CO(2) and NH(3) from urea (urease route): step 1/1. The protein is Urease subunit alpha of Ruegeria sp. (strain TM1040) (Silicibacter sp.).